We begin with the raw amino-acid sequence, 219 residues long: tRNA (guanine-N(7)-)-methyltransferase (219 aa).

4 residues coordinate S-adenosyl-L-methionine: glutamate 43, aspartate 68, glutamate 101, and asparagine 124. Positions 128 and 160 each coordinate substrate.

It belongs to the class I-like SAM-binding methyltransferase superfamily. TrmB family.

It carries out the reaction guanosine(46) in tRNA + S-adenosyl-L-methionine = N(7)-methylguanosine(46) in tRNA + S-adenosyl-L-homocysteine. Its pathway is tRNA modification; N(7)-methylguanine-tRNA biosynthesis. Functionally, catalyzes the formation of N(7)-methylguanine at position 46 (m7G46) in tRNA. This chain is tRNA (guanine-N(7)-)-methyltransferase, found in Clostridium beijerinckii (strain ATCC 51743 / NCIMB 8052) (Clostridium acetobutylicum).